Here is a 247-residue protein sequence, read N- to C-terminus: NAD-dependent protein deacetylase (247 aa).

Residues 1–244 (MIYEKVAEEL…PKILENVRQK (244 aa)) form the Deacetylase sirtuin-type domain. NAD(+) is bound by residues A22, T26, F33, R34, Q98, I100, D101, and H116. A nicotinamide-binding site is contributed by F33. Nicotinamide is bound by residues I100 and D101. Residue H116 is the Proton acceptor of the active site. Positions 124, 127, 149, and 151 each coordinate Zn(2+). NAD(+) is bound by residues S187, S188, N212, and V230.

The protein belongs to the sirtuin family. Class U subfamily. In terms of assembly, monomer. Zn(2+) serves as cofactor.

Its subcellular location is the cytoplasm. It catalyses the reaction N(6)-acetyl-L-lysyl-[protein] + NAD(+) + H2O = 2''-O-acetyl-ADP-D-ribose + nicotinamide + L-lysyl-[protein]. NAD-dependent protein deacetylase which modulates the activities of several enzymes which are inactive in their acetylated form. Deacetylates the N-terminal lysine residue of albA1, the major archaeal DNA compaction protein and that, in turn, increases albA1's DNA binding affinity, thereby repressing transcription. In Saccharolobus solfataricus (strain ATCC 35092 / DSM 1617 / JCM 11322 / P2) (Sulfolobus solfataricus), this protein is NAD-dependent protein deacetylase.